We begin with the raw amino-acid sequence, 502 residues long: Glutamate--tRNA ligase (502 aa).

Residues 9-19 (PSPTGFPHVGT) carry the 'HIGH' region motif. A 'KMSKS' region motif is present at residues 250–254 (KLSKR). Residue Lys-253 coordinates ATP.

This sequence belongs to the class-I aminoacyl-tRNA synthetase family. Glutamate--tRNA ligase type 1 subfamily. As to quaternary structure, monomer.

It is found in the cytoplasm. It carries out the reaction tRNA(Glu) + L-glutamate + ATP = L-glutamyl-tRNA(Glu) + AMP + diphosphate. Its function is as follows. Catalyzes the attachment of glutamate to tRNA(Glu) in a two-step reaction: glutamate is first activated by ATP to form Glu-AMP and then transferred to the acceptor end of tRNA(Glu). This is Glutamate--tRNA ligase from Acinetobacter baumannii (strain AYE).